Here is a 224-residue protein sequence, read N- to C-terminus: Flagellar L-ring protein (224 aa).

Positions 1–15 are cleaved as a signal peptide; it reads MARYFILAVALLLTA. The N-palmitoyl cysteine moiety is linked to residue cysteine 16. Cysteine 16 carries the S-diacylglycerol cysteine lipid modification.

This sequence belongs to the FlgH family. The basal body constitutes a major portion of the flagellar organelle and consists of four rings (L,P,S, and M) mounted on a central rod.

The protein resides in the cell outer membrane. It is found in the bacterial flagellum basal body. In terms of biological role, assembles around the rod to form the L-ring and probably protects the motor/basal body from shearing forces during rotation. This Shewanella sp. (strain MR-7) protein is Flagellar L-ring protein.